The following is a 215-amino-acid chain: Heart- and neural crest derivatives-expressed protein 1 (215 aa).

Disordered stretches follow at residues 53–109 (APDF…RTES) and 169–202 (VDGGRESKRKRELQQHEGFPPALGPGEKRIKGRT). The span at 65-75 (AAAAAATYGPD) shows a compositional bias: low complexity. The segment covering 92–104 (LGRRKGSGPKKER) has biased composition (basic residues). Residues 94 to 146 (RRKGSGPKKERRRTESINSAFAELRECIPNVPADTKLSKIKTLRLATSYIAYL) form the bHLH domain. Thr-107 is subject to Phosphothreonine; by PLK4. Ser-109 carries the post-translational modification Phosphoserine; by PLK4.

As to quaternary structure, efficient DNA binding requires dimerization with another bHLH protein. Forms homodimers and heterodimers with TCF3 gene products E12 and E47, HAND2 and HEY1, HEY2 and HEYL (hairy-related transcription factors). Interacts with MDFIC. Interacts with SOX15; the interaction enhances HAND1-induced differentiation of trophoblast giant cells. In terms of processing, phosphorylation by PLK4 disrupts the interaction with MDFIC and leads to translocation into the nucleoplasm, allowing dimerization and transcription factor activity.

The protein resides in the nucleus. The protein localises to the nucleoplasm. It is found in the nucleolus. In terms of biological role, transcription factor that plays an essential role in both trophoblast giant cell differentiation and in cardiac morphogenesis. Binds the DNA sequence 5'-NRTCTG-3' (non-canonical E-box). Acts as a transcriptional repressor of SOX15. In the adult, could be required for ongoing expression of cardiac-specific genes. This is Heart- and neural crest derivatives-expressed protein 1 (HAND1) from Oryctolagus cuniculus (Rabbit).